A 269-amino-acid polypeptide reads, in one-letter code: Tryptophan synthase alpha chain (269 aa).

Residues Glu-49 and Asp-60 each act as proton acceptor in the active site.

This sequence belongs to the TrpA family. As to quaternary structure, tetramer of two alpha and two beta chains.

It catalyses the reaction (1S,2R)-1-C-(indol-3-yl)glycerol 3-phosphate + L-serine = D-glyceraldehyde 3-phosphate + L-tryptophan + H2O. The protein operates within amino-acid biosynthesis; L-tryptophan biosynthesis; L-tryptophan from chorismate: step 5/5. Functionally, the alpha subunit is responsible for the aldol cleavage of indoleglycerol phosphate to indole and glyceraldehyde 3-phosphate. This Pseudomonas syringae pv. syringae protein is Tryptophan synthase alpha chain.